Here is a 307-residue protein sequence, read N- to C-terminus: Fructose-bisphosphate aldolase (307 aa).

A D-glyceraldehyde 3-phosphate-binding site is contributed by S49. The active-site Proton donor is D82. The Zn(2+) site is built by H83, D104, E134, and H180. Residue G181 coordinates dihydroxyacetone phosphate. Zn(2+) is bound at residue H210. Dihydroxyacetone phosphate contacts are provided by residues 211-213 (GAS) and 253-256 (NTDT).

It belongs to the class II fructose-bisphosphate aldolase family. In terms of assembly, homodimer. Zn(2+) is required as a cofactor.

The catalysed reaction is beta-D-fructose 1,6-bisphosphate = D-glyceraldehyde 3-phosphate + dihydroxyacetone phosphate. It participates in carbohydrate degradation; glycolysis; D-glyceraldehyde 3-phosphate and glycerone phosphate from D-glucose: step 4/4. Functionally, catalyzes the aldol condensation of dihydroxyacetone phosphate (DHAP or glycerone-phosphate) with glyceraldehyde 3-phosphate (G3P) to form fructose 1,6-bisphosphate (FBP) in gluconeogenesis and the reverse reaction in glycolysis. This Helicobacter pylori (strain ATCC 700392 / 26695) (Campylobacter pylori) protein is Fructose-bisphosphate aldolase (fba).